The chain runs to 213 residues: Small ribosomal subunit protein uS4 (213 aa).

One can recognise an S4 RNA-binding domain in the interval 97–165; that stretch reads RRLDNVVYRM…AKEQLRIKNA (69 aa).

This sequence belongs to the universal ribosomal protein uS4 family. In terms of assembly, part of the 30S ribosomal subunit. Contacts protein S5. The interaction surface between S4 and S5 is involved in control of translational fidelity.

Functionally, one of the primary rRNA binding proteins, it binds directly to 16S rRNA where it nucleates assembly of the body of the 30S subunit. With S5 and S12 plays an important role in translational accuracy. The protein is Small ribosomal subunit protein uS4 of Psychrobacter sp. (strain PRwf-1).